We begin with the raw amino-acid sequence, 454 residues long: Na(+)/H(+) antiporter NhaA (454 aa).

Helical transmembrane passes span 22-42, 64-84, 106-126, 150-170, 190-210, 228-248, 284-304, 306-326, 355-375, and 386-406; these read ISGL…NLPF, MGLG…TVGL, LCAV…ISLF, GWAV…ALFA, LLAI…YWFL, VPWL…FEAG, PFSA…VHFE, LTLA…LVVG, MFPA…IASL, and ARFG…ILLS.

Belongs to the NhaA Na(+)/H(+) (TC 2.A.33) antiporter family.

The protein localises to the cell membrane. It carries out the reaction Na(+)(in) + 2 H(+)(out) = Na(+)(out) + 2 H(+)(in). In terms of biological role, na(+)/H(+) antiporter that extrudes sodium in exchange for external protons. The protein is Na(+)/H(+) antiporter NhaA of Bifidobacterium adolescentis (strain ATCC 15703 / DSM 20083 / NCTC 11814 / E194a).